Reading from the N-terminus, the 639-residue chain is Mediator of RNA polymerase II transcription subunit 17 (639 aa).

Positions 160–187 (RLQSFNAAADKLLKSASRLENEVASETR) form a coiled coil.

This sequence belongs to the Mediator complex subunit 17 family. As to quaternary structure, component of the Mediator complex.

It is found in the nucleus. Functionally, component of the Mediator complex, a coactivator involved in the regulated transcription of nearly all RNA polymerase II-dependent genes. Mediator functions as a bridge to convey information from gene-specific regulatory proteins to the basal RNA polymerase II transcription machinery. Mediator is recruited to promoters by direct interactions with regulatory proteins and serves as a scaffold for the assembly of a functional preinitiation complex with RNA polymerase II and the general transcription factors. The chain is Mediator of RNA polymerase II transcription subunit 17 (srb4) from Aspergillus fumigatus (strain ATCC MYA-4609 / CBS 101355 / FGSC A1100 / Af293) (Neosartorya fumigata).